Here is a 388-residue protein sequence, read N- to C-terminus: DNA primase small subunit PriS (388 aa).

Residues aspartate 100, aspartate 102, and aspartate 288 contribute to the active site.

This sequence belongs to the eukaryotic-type primase small subunit family. Heterodimer of a small subunit (PriS) and a large subunit (PriL). Mg(2+) serves as cofactor. Mn(2+) is required as a cofactor.

Catalytic subunit of DNA primase, an RNA polymerase that catalyzes the synthesis of short RNA molecules used as primers for DNA polymerase during DNA replication. The small subunit contains the primase catalytic core and has DNA synthesis activity on its own. Binding to the large subunit stabilizes and modulates the activity, increasing the rate of DNA synthesis while decreasing the length of the DNA fragments, and conferring RNA synthesis capability. The DNA polymerase activity may enable DNA primase to also catalyze primer extension after primer synthesis. May also play a role in DNA repair. This chain is DNA primase small subunit PriS, found in Methanospirillum hungatei JF-1 (strain ATCC 27890 / DSM 864 / NBRC 100397 / JF-1).